The following is a 664-amino-acid chain: Alpha-1,4-glucan:maltose-1-phosphate maltosyltransferase (664 aa).

Residues K261, Q321, and D356 each contribute to the alpha-maltose 1-phosphate site. D393 acts as the Nucleophile in catalysis. N394 serves as a coordination point for alpha-maltose 1-phosphate. The Proton donor role is filled by E422. 533–534 serves as a coordination point for alpha-maltose 1-phosphate; it reads KY.

It belongs to the glycosyl hydrolase 13 family. GlgE subfamily. Homodimer.

It catalyses the reaction alpha-maltose 1-phosphate + [(1-&gt;4)-alpha-D-glucosyl](n) = [(1-&gt;4)-alpha-D-glucosyl](n+2) + phosphate. In terms of biological role, maltosyltransferase that uses maltose 1-phosphate (M1P) as the sugar donor to elongate linear or branched alpha-(1-&gt;4)-glucans. Is involved in a branched alpha-glucan biosynthetic pathway from trehalose, together with TreS, Mak and GlgB. The sequence is that of Alpha-1,4-glucan:maltose-1-phosphate maltosyltransferase from Pseudomonas aeruginosa (strain ATCC 15692 / DSM 22644 / CIP 104116 / JCM 14847 / LMG 12228 / 1C / PRS 101 / PAO1).